Consider the following 1392-residue polypeptide: L-2-aminoadipate reductase (1392 aa).

Lysine 541 is covalently cross-linked (Glycyl lysine isopeptide (Lys-Gly) (interchain with G-Cter in ubiquitin)). Residues 843 to 920 (SQFTNVEREV…AFAAEIDRIK (78 aa)) form the Carrier domain. Residue serine 880 is modified to O-(pantetheine 4'-phosphoryl)serine. Residue lysine 1276 forms a Glycyl lysine isopeptide (Lys-Gly) (interchain with G-Cter in ubiquitin) linkage.

Belongs to the ATP-dependent AMP-binding enzyme family. Pantetheine 4'-phosphate is required as a cofactor.

It carries out the reaction (S)-2-amino-6-oxohexanoate + NADP(+) + H2O = L-2-aminoadipate + NADPH + 2 H(+). The enzyme catalyses (S)-2-amino-6-oxohexanoate + NAD(+) + H2O = L-2-aminoadipate + NADH + 2 H(+). The catalysed reaction is (S)-2-amino-6-oxohexanoate + AMP + diphosphate + NADP(+) = L-2-aminoadipate + ATP + NADPH + H(+). The protein operates within amino-acid biosynthesis; L-lysine biosynthesis via AAA pathway; L-lysine from L-alpha-aminoadipate (fungal route): step 1/3. Catalyzes the activation of alpha-aminoadipate by ATP-dependent adenylation and the reduction of activated alpha-aminoadipate by NADPH. The activated alpha-aminoadipate is bound to the phosphopantheinyl group of the enzyme itself before it is reduced to (S)-2-amino-6-oxohexanoate. This is L-2-aminoadipate reductase (LYS2) from Saccharomyces cerevisiae (strain ATCC 204508 / S288c) (Baker's yeast).